A 614-amino-acid chain; its full sequence is Phosphomethylpyrimidine synthase (614 aa).

Residues Asn-226, Met-255, Tyr-284, His-320, 340-342 (SRG), 381-384 (DGLR), and Glu-420 contribute to the substrate site. A Zn(2+)-binding site is contributed by His-424. Position 447 (Tyr-447) interacts with substrate. Residue His-488 coordinates Zn(2+). [4Fe-4S] cluster contacts are provided by Cys-568, Cys-571, and Cys-576.

The protein belongs to the ThiC family. In terms of assembly, homodimer. It depends on [4Fe-4S] cluster as a cofactor.

It catalyses the reaction 5-amino-1-(5-phospho-beta-D-ribosyl)imidazole + S-adenosyl-L-methionine = 4-amino-2-methyl-5-(phosphooxymethyl)pyrimidine + CO + 5'-deoxyadenosine + formate + L-methionine + 3 H(+). It participates in cofactor biosynthesis; thiamine diphosphate biosynthesis. In terms of biological role, catalyzes the synthesis of the hydroxymethylpyrimidine phosphate (HMP-P) moiety of thiamine from aminoimidazole ribotide (AIR) in a radical S-adenosyl-L-methionine (SAM)-dependent reaction. The polypeptide is Phosphomethylpyrimidine synthase (Acidovorax sp. (strain JS42)).